Here is a 1942-residue protein sequence, read N- to C-terminus: GREB1-like protein (1942 aa).

Disordered regions lie at residues S76–G101, P235–T306, M325–W373, and T1123–V1256. The segment covering E81–D90 has biased composition (acidic residues). A compositionally biased stretch (low complexity) spans S237–S253. Polar residues predominate over residues N338–S362. A compositionally biased stretch (basic and acidic residues) spans T1127 to R1155. A compositionally biased stretch (low complexity) spans S1158–T1171. The segment covering E1172 to S1202 has biased composition (polar residues). The span at S1212–P1248 shows a compositional bias: low complexity. A helical membrane pass occupies residues G1861–L1881.

The protein belongs to the GREB1 family.

It localises to the membrane. Plays a major role in early metanephros development. The sequence is that of GREB1-like protein (greb1l) from Danio rerio (Zebrafish).